Here is a 411-residue protein sequence, read N- to C-terminus: Anaerobic sulfatase-maturating enzyme homolog AslB (411 aa).

Residues 3-250 (QQVPTRAFHV…LVAIFDHWIK (248 aa)) enclose the Radical SAM core domain. Residues Cys-21 and Cys-25 each contribute to the [4Fe-4S] cluster site. Tyr-27 contributes to the S-adenosyl-L-methionine binding site. Position 28 (Cys-28) interacts with [4Fe-4S] cluster. The S-adenosyl-L-methionine site is built by Gly-74, Ser-129, and Arg-141. 3 residues coordinate [4Fe-4S] cluster: Cys-276, Cys-282, and Cys-297. Asp-298 functions as the Proton acceptor in the catalytic mechanism. Cys-339, Cys-342, Cys-348, Cys-352, and Cys-371 together coordinate [4Fe-4S] cluster.

This sequence belongs to the radical SAM superfamily. Anaerobic sulfatase-maturating enzyme family. [4Fe-4S] cluster is required as a cofactor.

The sequence is that of Anaerobic sulfatase-maturating enzyme homolog AslB (aslB) from Escherichia coli (strain K12).